A 432-amino-acid polypeptide reads, in one-letter code: C-type cytochrome OmcS (432 aa).

Positions 1–25 are cleaved as a signal peptide; the sequence is MKKGMKVSLSVAAAALLMSAPAAFA.

Requires heme as cofactor.

It is found in the cell outer membrane. It localises to the cell surface. Its function is as follows. Plays an important role in extracellular electron transfer. Can transfer electrons to insoluble Fe(3+) oxides as well as other extracellular electron acceptors, including Mn(4+) oxide and humic substances. Essential for direct interspecies electron transfer (DIET) in cocultures with G.metallireducens. The polypeptide is C-type cytochrome OmcS (Geobacter sulfurreducens (strain ATCC 51573 / DSM 12127 / PCA)).